Here is a 335-residue protein sequence, read N- to C-terminus: DNA-directed RNA polymerase subunit alpha (335 aa).

Residues 1-231 (MVREKITVST…DLLIPFLHTK (231 aa)) form an alpha N-terminal domain (alpha-NTD) region. The segment at 263-335 (KKMALKSIFI…FVIDLPKNKF (73 aa)) is alpha C-terminal domain (alpha-CTD).

The protein belongs to the RNA polymerase alpha chain family. As to quaternary structure, in plastids the minimal PEP RNA polymerase catalytic core is composed of four subunits: alpha, beta, beta', and beta''. When a (nuclear-encoded) sigma factor is associated with the core the holoenzyme is formed, which can initiate transcription.

The protein resides in the plastid. Its subcellular location is the chloroplast. The catalysed reaction is RNA(n) + a ribonucleoside 5'-triphosphate = RNA(n+1) + diphosphate. DNA-dependent RNA polymerase catalyzes the transcription of DNA into RNA using the four ribonucleoside triphosphates as substrates. The protein is DNA-directed RNA polymerase subunit alpha of Lactuca sativa (Garden lettuce).